A 252-amino-acid polypeptide reads, in one-letter code: Ditrans,polycis-undecaprenyl-diphosphate synthase ((2E,6E)-farnesyl-diphosphate specific) (252 aa).

The active site involves aspartate 25. Aspartate 25 contacts Mg(2+). Substrate-binding positions include 26–29, tryptophan 30, arginine 38, histidine 42, and 70–72; these read GNGR and SSE. Asparagine 73 functions as the Proton acceptor in the catalytic mechanism. Tryptophan 74, arginine 76, and arginine 193 together coordinate substrate. Residue histidine 198 coordinates Mg(2+). 199–201 contacts substrate; sequence RIS. Residue glutamate 212 coordinates Mg(2+).

Belongs to the UPP synthase family. In terms of assembly, homodimer. Requires Mg(2+) as cofactor.

The catalysed reaction is 8 isopentenyl diphosphate + (2E,6E)-farnesyl diphosphate = di-trans,octa-cis-undecaprenyl diphosphate + 8 diphosphate. In terms of biological role, catalyzes the sequential condensation of isopentenyl diphosphate (IPP) with (2E,6E)-farnesyl diphosphate (E,E-FPP) to yield (2Z,6Z,10Z,14Z,18Z,22Z,26Z,30Z,34E,38E)-undecaprenyl diphosphate (di-trans,octa-cis-UPP). UPP is the precursor of glycosyl carrier lipid in the biosynthesis of bacterial cell wall polysaccharide components such as peptidoglycan and lipopolysaccharide. This chain is Ditrans,polycis-undecaprenyl-diphosphate synthase ((2E,6E)-farnesyl-diphosphate specific), found in Salmonella typhi.